Consider the following 357-residue polypeptide: CD4+ T-cell-stimulating antigen (357 aa).

The first 22 residues, 1–22 (MKKRTFALALSMIIASGVVLGA), serve as a signal peptide directing secretion. Cys-23 carries N-palmitoyl cysteine lipidation. Residue Cys-23 is the site of S-diacylglycerol cysteine attachment.

It belongs to the BMP lipoprotein family.

The protein resides in the cell membrane. This chain is CD4+ T-cell-stimulating antigen (tcsA), found in Listeria innocua serovar 6a (strain ATCC BAA-680 / CLIP 11262).